Consider the following 159-residue polypeptide: Large ribosomal subunit protein mL50 (159 aa).

It belongs to the mitochondrion-specific ribosomal protein mL50 family. Component of the mitochondrial ribosome large subunit (39S) which comprises a 16S rRNA and about 50 distinct proteins.

The protein localises to the mitochondrion. The protein is Large ribosomal subunit protein mL50 (MRPL50) of Bos taurus (Bovine).